A 202-amino-acid polypeptide reads, in one-letter code: MNYLAIVGTNSEVSTNRMLLQFMQRHFQAQAQLELYEIRDLPAFYEADDDQVPQEVTSLSDKIRQADGVIIATPEYDHAIPAVLKSALEWISYTSQALTDKPVLIVGASHGALGSSRAQAHLRQILDSPELAARLMPSSEFLLGKSQAAFNRSGQLIDEHKLAELDEIFREFVLFTEMITKLLSERTIIKKDKKYAWQTREA.

This sequence belongs to the NADH-dependent flavin reductase family. As to quaternary structure, NADH:(hydroxy)cinnamate reductase Crd is a heterodimer composed of CrdA and CrdB subunits, encoded by adjacent genes. It depends on FMN as a cofactor.

Its function is as follows. Component of the NADH:(hydroxy)cinnamate reductase. CrdA is probably reduced by NADH and then transfers the electrons to the catalytic center of CrdB. Is likely involved in protecting V.ruber from (hydroxy)cinnamate poisoning. This Vibrio ruber (strain DSM 16370 / JCM 11486 / BCRC 17186 / CECT 7878 / LMG 23124 / VR1) protein is NADH:(hydroxy)cinnamate reductase subunit CrdA.